The sequence spans 596 residues: Elongation factor 4 (596 aa).

A tr-type G domain is found at lysine 2–valine 183. Residues aspartate 14–threonine 19 and asparagine 130–aspartate 133 contribute to the GTP site.

The protein belongs to the TRAFAC class translation factor GTPase superfamily. Classic translation factor GTPase family. LepA subfamily.

It is found in the cell inner membrane. It catalyses the reaction GTP + H2O = GDP + phosphate + H(+). Required for accurate and efficient protein synthesis under certain stress conditions. May act as a fidelity factor of the translation reaction, by catalyzing a one-codon backward translocation of tRNAs on improperly translocated ribosomes. Back-translocation proceeds from a post-translocation (POST) complex to a pre-translocation (PRE) complex, thus giving elongation factor G a second chance to translocate the tRNAs correctly. Binds to ribosomes in a GTP-dependent manner. In Sulfurimonas denitrificans (strain ATCC 33889 / DSM 1251) (Thiomicrospira denitrificans (strain ATCC 33889 / DSM 1251)), this protein is Elongation factor 4.